The sequence spans 462 residues: MSSRSPKDLIKSKWGSRPSSSKSDTALEKFKGEIAAFKTSLDEITNGKGKVANKDRSKLLEKIQVLEAEREKNVYYLMEKDKEIQRLKDHLRSRYSSSSLLEQLEEKTKECEKKQQLLESLSRETDILKKQLSATTKRLSELESKASTLHLSQSVPANCFNSSMNSIHEKEMQLKDALEKNQQWLVYDQQREAYVKGLLAKIFELEKRTETAAASLPQQMKKTESEGYLQEEKQKYDHLLENAKKDLEVERQTVTQLRLELDEFRRKYEETQKEVEDLNQLLSSQRKADIQHLEEDKHKTEKIQKLREESSVFKGKLEEERKKSEELLSQVRILYDSLLKHQEEQSRVALLERQMQACTLDFENEKLDRQNMQHQLYVILKELRKAKSQITQLESLKQLHGFTFTEQPFPLQGEPENRVKATSPKSPTAVLNESLVECPKCSVQYPATEHRDLLVHVEYCMK.

Residues Met-1–Lys-11 are compositionally biased toward basic and acidic residues. The segment at Met-1–Thr-25 is disordered. Positions Ser-12–Ser-23 are enriched in low complexity. Coiled coils occupy residues Lys-50 to Leu-185 and Tyr-228 to His-400. A phosphoserine mark is found at Ser-96 and Ser-99. Residues Ala-157–Lys-235 are interaction with TSG101. The interval Phe-160–Ala-214 is interaction with PDCD6IP. A required for localization to the interphase centrosome and to the midbody during cytokinesis region spans residues Gln-354–Lys-462. Phosphoserine is present on residues Ser-423 and Ser-426. Phosphothreonine is present on Thr-428. A Phosphoserine; by PLK1 modification is found at Ser-434.

Homodimer. Interacts (phosphorylated on Ser-423 and Ser-426) with PLK1; the interaction is indirect via the MTMR3:MTMR4 heterooligomer, occurs during early mitosis, regulates the phosphorylation of CEP55 by PLK1 and its recruitment to the midbody where it can mediate cell abscission. Interacts with AKAP9/CG-NAP; the interaction occurs in interphase and is lost upon mitotic entry. Interacts with PCNT/Kendrin; the interaction occurs in interphase and is lost upon mitotic entry. Directly interacts with PDCD6IP; this interaction is required for PDCD6IP targeting to the midbody; CEP55 binds PDCD6IP in a 2:1 stoichiometry; PDCD6IP competes with TSG101 for the same binding site. Interacts with TSG101; TSG101 competes with PDCD6IP for the same binding site; interaction is required for cytokinesis. Interacts with MVB12A, VPS37B, VPS37C and VPS28. In terms of processing, there is a hierachy of phosphorylation, where both Ser-423 and Ser-426 are phosphorylated at the onset of mitosis, prior to Ser-434. Phosphorylation at Ser-423 and Ser-426 is required for dissociation from the centrosome at the G2/M boundary. Phosphorylation at the 3 sites, Ser-423, Ser-426 and Ser-434, is required for protein function at the final stages of cell division to complete cytokinesis successfully.

Its subcellular location is the cytoplasm. The protein localises to the cytoskeleton. It localises to the microtubule organizing center. The protein resides in the centrosome. It is found in the centriole. Its subcellular location is the cleavage furrow. The protein localises to the midbody. It localises to the midbody ring. In terms of biological role, plays a role in mitotic exit and cytokinesis. Recruits PDCD6IP and TSG101 to midbody during cytokinesis. Required for successful completion of cytokinesis. Not required for microtubule nucleation. Plays a role in the development of the brain and kidney. The sequence is that of Centrosomal protein of 55 kDa from Rattus norvegicus (Rat).